The following is a 698-amino-acid chain: Polyphosphate kinase (698 aa).

ATP is bound at residue N63. Positions 390 and 420 each coordinate Mg(2+). H450 functions as the Phosphohistidine intermediate in the catalytic mechanism. Y483, R579, and H607 together coordinate ATP.

Belongs to the polyphosphate kinase 1 (PPK1) family. The cofactor is Mg(2+). Post-translationally, an intermediate of this reaction is the autophosphorylated ppk in which a phosphate is covalently linked to a histidine residue through a N-P bond.

It carries out the reaction [phosphate](n) + ATP = [phosphate](n+1) + ADP. In terms of biological role, catalyzes the reversible transfer of the terminal phosphate of ATP to form a long-chain polyphosphate (polyP). This is Polyphosphate kinase from Xylella fastidiosa (strain Temecula1 / ATCC 700964).